Reading from the N-terminus, the 194-residue chain is Peroxiredoxin 2 (194 aa).

Residues P2 to Y160 enclose the Thioredoxin domain. The Cysteine sulfenic acid (-SOH) intermediate role is filled by C47. A Phosphothreonine modification is found at T193. S194 carries the post-translational modification Phosphoserine.

This sequence belongs to the peroxiredoxin family. AhpC/Prx1 subfamily. Homodimer; disulfide-linked, upon oxidation. 5 homodimers assemble to form a ring-like decamer. Also exists as a monomer. In terms of processing, the enzyme can be inactivated by further oxidation of the cysteine sulfenic acid (C(P)-SOH) to sulphinic acid (C(P)-SO2H) instead of its condensation to a disulfide bond. It can be reactivated by forming a transient disulfide bond with sulfiredoxin SRXN1, which reduces the cysteine sulfinic acid in an ATP- and Mg-dependent manner. Post-translationally, conjugated to URM1, a ubiquitin-like protein. As to expression, detected in the head and body (at protein level).

Its subcellular location is the cytoplasm. It catalyses the reaction a hydroperoxide + [thioredoxin]-dithiol = an alcohol + [thioredoxin]-disulfide + H2O. Thiol-specific peroxidase that catalyzes the reduction of hydrogen peroxide and organic hydroperoxides to water and alcohols, respectively. Plays a role in cell protection against oxidative stress by detoxifying peroxides and as sensor of hydrogen peroxide-mediated signaling events. Might participate in the signaling cascades of growth factors and tumor necrosis factor-alpha by regulating the intracellular concentrations of H(2)O(2). Reduces an intramolecular disulfide bond in GDPD5 that gates the ability to GDPD5 to drive postmitotic motor neuron differentiation. The chain is Peroxiredoxin 2 from Drosophila melanogaster (Fruit fly).